The sequence spans 92 residues: UPF0728 protein (92 aa).

It belongs to the UPF0728 family.

The sequence is that of UPF0728 protein from Branchiostoma floridae (Florida lancelet).